Reading from the N-terminus, the 513-residue chain is Sterol 14-alpha demethylase rstn2 (513 aa).

A helical membrane pass occupies residues 3–23 (WPLIGAYALLAFVAIIALNVT). A heme-binding site is contributed by Cys-453.

This sequence belongs to the cytochrome P450 family. The cofactor is heme.

Its subcellular location is the membrane. The catalysed reaction is a 14alpha-methyl steroid + 3 reduced [NADPH--hemoprotein reductase] + 3 O2 = a Delta(14) steroid + formate + 3 oxidized [NADPH--hemoprotein reductase] + 4 H2O + 4 H(+). It catalyses the reaction a 14alpha-methyl steroid + reduced [NADPH--hemoprotein reductase] + O2 = a 14alpha-hydroxymethyl steroid + oxidized [NADPH--hemoprotein reductase] + H2O + H(+). It carries out the reaction a 14alpha-hydroxymethyl steroid + reduced [NADPH--hemoprotein reductase] + O2 = a 14alpha-formyl steroid + oxidized [NADPH--hemoprotein reductase] + 2 H2O + H(+). The enzyme catalyses a 14alpha-formyl steroid + reduced [NADPH--hemoprotein reductase] + O2 = a Delta(14) steroid + formate + oxidized [NADPH--hemoprotein reductase] + H2O + 2 H(+). The catalysed reaction is lanosterol + 3 reduced [NADPH--hemoprotein reductase] + 3 O2 = 4,4-dimethyl-5alpha-cholesta-8,14,24-trien-3beta-ol + formate + 3 oxidized [NADPH--hemoprotein reductase] + 4 H2O + 4 H(+). It catalyses the reaction lanosterol + reduced [NADPH--hemoprotein reductase] + O2 = 32-hydroxylanosterol + oxidized [NADPH--hemoprotein reductase] + H2O + H(+). It carries out the reaction 32-hydroxylanosterol + reduced [NADPH--hemoprotein reductase] + O2 = 32-oxolanosterol + oxidized [NADPH--hemoprotein reductase] + 2 H2O + H(+). The enzyme catalyses 32-oxolanosterol + reduced [NADPH--hemoprotein reductase] + O2 = 4,4-dimethyl-5alpha-cholesta-8,14,24-trien-3beta-ol + formate + oxidized [NADPH--hemoprotein reductase] + H2O + 2 H(+). The catalysed reaction is eburicol + 3 reduced [NADPH--hemoprotein reductase] + 3 O2 = 14-demethyleburicol + formate + 3 oxidized [NADPH--hemoprotein reductase] + 4 H2O + 4 H(+). It catalyses the reaction eburicol + reduced [NADPH--hemoprotein reductase] + O2 = 32-hydroxyeburicol + oxidized [NADPH--hemoprotein reductase] + H2O + H(+). It carries out the reaction 32-hydroxyeburicol + reduced [NADPH--hemoprotein reductase] + O2 = 32-oxoeburicol + oxidized [NADPH--hemoprotein reductase] + 2 H2O + H(+). The enzyme catalyses 32-oxoeburicol + reduced [NADPH--hemoprotein reductase] + O2 = 14-demethyleburicol + formate + oxidized [NADPH--hemoprotein reductase] + H2O + 2 H(+). It participates in steroid biosynthesis; sterol biosynthesis. Sterol 14-alpha demethylase; part of the gene cluster that mediates the biosynthesis of the tetrahydropyranyl antifungal agent restricticin that acts as an inhibitor of CYP51 and blocks the ergosterol biosynthesis. Sterol 14-alpha-demethylase plays a critical role in the biosynthesis of ergosterol, the major sterol component in fungal membranes that participates in a variety of functions. Rtsn2 acts as a self-resistant CYP51 that contains mutations found in CYP51s isolated from azole resistance strains and that is not inhibited by the final product of the cluster, restricticin. This is Sterol 14-alpha demethylase rstn2 from Aspergillus nomiae NRRL (strain ATCC 15546 / NRRL 13137 / CBS 260.88 / M93).